Here is a 301-residue protein sequence, read N- to C-terminus: MTHSIRIGTRKSPLALIQTNLVIQQIKQFVPDINYKIVPITTSGDLIQNKPLYDIGGKALFLKEIEQALLDKKIDLAVHSLKDVPGRIPEDLIIAAVLEREDPRDVFVCLKYKSIEELPQNAIIGSSAVRRKTFIEKIRSDLKVTVFRGNVDSRIKKLMNGEVDATILAYAGLKRLNAFNPQYCHLIEYSQMLPCIGQGVIAVEIRKDDNAMLETCNQINHLTTFELIKPERAFLEYLDANCRTPIAAYSKYLDKDNIETDFMLGNLESSKITFHTETTNIKTSKEAGIKAAKIMLSELER.

An S-(dipyrrolylmethanemethyl)cysteine modification is found at Cys-242.

This sequence belongs to the HMBS family. Monomer. It depends on dipyrromethane as a cofactor.

The catalysed reaction is 4 porphobilinogen + H2O = hydroxymethylbilane + 4 NH4(+). The protein operates within porphyrin-containing compound metabolism; protoporphyrin-IX biosynthesis; coproporphyrinogen-III from 5-aminolevulinate: step 2/4. In terms of biological role, tetrapolymerization of the monopyrrole PBG into the hydroxymethylbilane pre-uroporphyrinogen in several discrete steps. The sequence is that of Porphobilinogen deaminase from Rickettsia canadensis (strain McKiel).